We begin with the raw amino-acid sequence, 454 residues long: Phosphoglucosamine mutase (454 aa).

S104 (phosphoserine intermediate) is an active-site residue. The Mg(2+) site is built by S104, D247, D249, and D251. S104 is modified (phosphoserine).

It belongs to the phosphohexose mutase family. Mg(2+) serves as cofactor. Post-translationally, activated by phosphorylation.

The catalysed reaction is alpha-D-glucosamine 1-phosphate = D-glucosamine 6-phosphate. Functionally, catalyzes the conversion of glucosamine-6-phosphate to glucosamine-1-phosphate. The protein is Phosphoglucosamine mutase of Bifidobacterium animalis subsp. lactis (strain AD011).